Here is a 153-residue protein sequence, read N- to C-terminus: Arginine repressor (153 aa).

Belongs to the ArgR family.

It is found in the cytoplasm. It functions in the pathway amino-acid biosynthesis; L-arginine biosynthesis [regulation]. Functionally, regulates arginine biosynthesis genes. The polypeptide is Arginine repressor (Glaesserella parasuis serovar 5 (strain SH0165) (Haemophilus parasuis)).